We begin with the raw amino-acid sequence, 276 residues long: Polyamine aminopropyltransferase (276 aa).

The PABS domain maps to 3–236 (ELWYTEKQTK…GLWTFTIGSK (234 aa)). Residue Gln-32 participates in S-methyl-5'-thioadenosine binding. Spermidine contacts are provided by His-63 and Asp-87. S-methyl-5'-thioadenosine-binding positions include Asp-107 and 138–139 (DG). The active-site Proton acceptor is the Asp-156. 156-159 (DSTE) contacts spermidine. S-methyl-5'-thioadenosine is bound at residue Pro-163.

This sequence belongs to the spermidine/spermine synthase family. Homodimer or homotetramer.

The protein resides in the cytoplasm. It catalyses the reaction S-adenosyl 3-(methylsulfanyl)propylamine + putrescine = S-methyl-5'-thioadenosine + spermidine + H(+). The protein operates within amine and polyamine biosynthesis; spermidine biosynthesis; spermidine from putrescine: step 1/1. Involved in the cell growth and proliferation. Catalyzes the irreversible transfer of a propylamine group from the amino donor S-adenosylmethioninamine (decarboxy-AdoMet) to putrescine (1,4-diaminobutane) to yield spermidine. In Bacillus subtilis (strain 168), this protein is Polyamine aminopropyltransferase.